Reading from the N-terminus, the 541-residue chain is MDKTHTEYIDLTREISELSDRQKKFDLESVTDSLDDLDYSDDSNSPENELEILPEDVHTKKIIIDWTRHAESCSNLDSNNVHDTDEYPLRKTGYDNLNSHDKYISEKSNTNAIMMARKMTSKVKALAMYHPNISYIGCQQAVLLGSYLTKKEYQYDAVFASPTVRSIMTALMICRGLKVTIYVVPYINEHTNLAGSKDNQNTPLNSTLLKKQILYIKDWLENNWINNFDDIYVMNVLGDLRKEMTNMVNNPYSEDIIKKIDYIFNCKPNLKKDGGNVNDYGQKCAIFEEINNIIKILDQKFSNAKKSNLIERGVFDEDLESIHDTLKKITDKKFIRGPSVNFTILEMLEKIESEKIPNDDKFFIHQNLRKSCLNKFYTKILPISFNLNFINRNKITIAIMCVSHGGAMKKYFKSKYPSKNIPDHVLNTQIFREAIFINDNAIEAYSIDFNYYVPRKIRATYSNFETLNIDICRLGSLKGILNYPLYSPEWESKIKPKLSFKTLPPVNYATPDSKFYFENKDKYQESITDYEIMGGFNFIHN.

It is found in the virion. This is an uncharacterized protein from Acanthamoeba polyphaga mimivirus (APMV).